An 80-amino-acid polypeptide reads, in one-letter code: Large ribosomal subunit protein eL38 (80 aa).

Belongs to the eukaryotic ribosomal protein eL38 family. In terms of assembly, component of the large ribosomal subunit (LSU). Mature N.crassa ribosomes consist of a small (40S) and a large (60S) subunit. The 40S small subunit contains 1 molecule of ribosomal RNA (18S rRNA) and at least 32 different proteins. The large 60S subunit contains 3 rRNA molecules (26S, 5.8S and 5S rRNA) and at least 42 different proteins.

The protein resides in the cytoplasm. In terms of biological role, component of the ribosome, a large ribonucleoprotein complex responsible for the synthesis of proteins in the cell. The small ribosomal subunit (SSU) binds messenger RNAs (mRNAs) and translates the encoded message by selecting cognate aminoacyl-transfer RNA (tRNA) molecules. The large subunit (LSU) contains the ribosomal catalytic site termed the peptidyl transferase center (PTC), which catalyzes the formation of peptide bonds, thereby polymerizing the amino acids delivered by tRNAs into a polypeptide chain. The nascent polypeptides leave the ribosome through a tunnel in the LSU and interact with protein factors that function in enzymatic processing, targeting, and the membrane insertion of nascent chains at the exit of the ribosomal tunnel. The protein is Large ribosomal subunit protein eL38 (rpl-38) of Neurospora crassa (strain ATCC 24698 / 74-OR23-1A / CBS 708.71 / DSM 1257 / FGSC 987).